The chain runs to 276 residues: Small ribosomal subunit protein uS2 (276 aa).

Residues 226–276 form a disordered region; the sequence is KKAREERQLAAAREAAGEPKSEDAPAEAAATEEAPATEAPAAEAQQENAAE. Residues 251–276 show a composition bias toward low complexity; sequence AEAAATEEAPATEAPAAEAQQENAAE.

It belongs to the universal ribosomal protein uS2 family.

The protein is Small ribosomal subunit protein uS2 of Corynebacterium efficiens (strain DSM 44549 / YS-314 / AJ 12310 / JCM 11189 / NBRC 100395).